Consider the following 194-residue polypeptide: BCL2/adenovirus E1B 19 kDa protein-interacting protein 3 (194 aa).

The tract at residues 1–102 (MSQNGAPGMQ…SQSEEDDIER (102 aa)) is disordered. Basic and acidic residues predominate over residues 42–55 (DMEKILLDAQHESG). Residues Ser-54, Ser-66, Ser-86, Ser-92, and Ser-95 each carry the phosphoserine modification. Over residues 56–69 (RSSSKSSHCDSPPR) the composition is skewed to low complexity. Over residues 78–88 (RASETDTHSIG) the composition is skewed to basic and acidic residues. The BH3 motif lies at 100–125 (IERRKEVESILKKNSDWIWDWSSRPE). The chain crosses the membrane as a helical span at residues 164–184 (VFLPSLLLSHLLAIGLGIYIG).

It belongs to the NIP3 family. In terms of assembly, homodimer. Binds to BCL2. Interacts with BNIP3L and ACAA2. Interacts (via BH3 domain) with SPATA18 (via coiled-coil domains). Interacts with BOK; promotes BOK oligomerization. Interacts with PPTC7; this interaction promotes BNIP3 degradation. (Microbial infection) Interacts with adenovirus E1B 19 kDa protein. As to quaternary structure, (Microbial infection) Interacts with Epstein-Barr virus BHRF1.

Its subcellular location is the mitochondrion. The protein resides in the mitochondrion outer membrane. Functionally, apoptosis-inducing protein that can overcome BCL2 suppression. May play a role in repartitioning calcium between the two major intracellular calcium stores in association with BCL2. Involved in mitochondrial quality control via its interaction with SPATA18/MIEAP: in response to mitochondrial damage, participates in mitochondrial protein catabolic process (also named MALM) leading to the degradation of damaged proteins inside mitochondria. The physical interaction of SPATA18/MIEAP, BNIP3 and BNIP3L/NIX at the mitochondrial outer membrane regulates the opening of a pore in the mitochondrial double membrane in order to mediate the translocation of lysosomal proteins from the cytoplasm to the mitochondrial matrix. Plays an important role in the calprotectin (S100A8/A9)-induced cell death pathway. This is BCL2/adenovirus E1B 19 kDa protein-interacting protein 3 from Homo sapiens (Human).